The chain runs to 578 residues: Penicillin-binding protein activator LpoA (578 aa).

An N-terminal signal peptide occupies residues 1-30 (MPTILVQSYGFRQKMKTIFIPTALALLLAA). A lipid anchor (N-palmitoyl cysteine) is attached at Cys-31. Residue Cys-31 is the site of S-diacylglycerol cysteine attachment.

This sequence belongs to the LpoA family. As to quaternary structure, interacts with PBP1a.

It is found in the cell outer membrane. Regulator of peptidoglycan synthesis that is essential for the function of penicillin-binding protein 1A (PBP1a). In Glaesserella parasuis serovar 5 (strain SH0165) (Haemophilus parasuis), this protein is Penicillin-binding protein activator LpoA.